We begin with the raw amino-acid sequence, 286 residues long: Bifunctional protein FolD (286 aa).

NADP(+) contacts are provided by residues 166–168 (GRS) and Ser191.

The protein belongs to the tetrahydrofolate dehydrogenase/cyclohydrolase family. Homodimer.

The catalysed reaction is (6R)-5,10-methylene-5,6,7,8-tetrahydrofolate + NADP(+) = (6R)-5,10-methenyltetrahydrofolate + NADPH. The enzyme catalyses (6R)-5,10-methenyltetrahydrofolate + H2O = (6R)-10-formyltetrahydrofolate + H(+). Its pathway is one-carbon metabolism; tetrahydrofolate interconversion. Its function is as follows. Catalyzes the oxidation of 5,10-methylenetetrahydrofolate to 5,10-methenyltetrahydrofolate and then the hydrolysis of 5,10-methenyltetrahydrofolate to 10-formyltetrahydrofolate. In Lactiplantibacillus plantarum (strain ATCC BAA-793 / NCIMB 8826 / WCFS1) (Lactobacillus plantarum), this protein is Bifunctional protein FolD.